The primary structure comprises 1055 residues: Vacuolar protein sorting-associated protein 54 (1055 aa).

The stretch at 363–383 (TKKIIEVHQKYEQKKHLLAKL) forms a coiled coil. Residues 774–794 (IDDGPTKKPFKRTGSSATIDS) form a disordered region.

Belongs to the VPS54 family. In terms of assembly, component of the Golgi-associated retrograde protein (GARP) complex, also called VFT (VPS fifty-three) complex, composed of VPS51, VPS52, VPS53 and VPS54.

The protein localises to the golgi apparatus. It is found in the trans-Golgi network. Its function is as follows. Acts as a component of the GARP complex that is involved in retrograde transport from early and late endosomes to the trans-Golgi network (TGN). The GARP complex facilitates tethering as well as SNARE complex assembly at the Golgi. The polypeptide is Vacuolar protein sorting-associated protein 54 (vps-54) (Caenorhabditis briggsae).